The sequence spans 373 residues: 1-deoxy-D-xylulose 5-phosphate reductoisomerase (373 aa).

Thr-10, Gly-11, Ser-12, Ile-13, Arg-37, and Asn-112 together coordinate NADPH. A 1-deoxy-D-xylulose 5-phosphate-binding site is contributed by Lys-113. NADPH is bound at residue Glu-114. Asp-134 contacts Mn(2+). 4 residues coordinate 1-deoxy-D-xylulose 5-phosphate: Ser-135, Glu-136, Ser-160, and His-183. Glu-136 provides a ligand contact to Mn(2+). Residue Gly-189 coordinates NADPH. 1-deoxy-D-xylulose 5-phosphate contacts are provided by Ser-196, Asn-201, Lys-202, and Glu-205. Mn(2+) is bound at residue Glu-205.

It belongs to the DXR family. Mg(2+) is required as a cofactor. Mn(2+) serves as cofactor.

It carries out the reaction 2-C-methyl-D-erythritol 4-phosphate + NADP(+) = 1-deoxy-D-xylulose 5-phosphate + NADPH + H(+). The protein operates within isoprenoid biosynthesis; isopentenyl diphosphate biosynthesis via DXP pathway; isopentenyl diphosphate from 1-deoxy-D-xylulose 5-phosphate: step 1/6. Its function is as follows. Catalyzes the NADPH-dependent rearrangement and reduction of 1-deoxy-D-xylulose-5-phosphate (DXP) to 2-C-methyl-D-erythritol 4-phosphate (MEP). The sequence is that of 1-deoxy-D-xylulose 5-phosphate reductoisomerase from Persephonella marina (strain DSM 14350 / EX-H1).